The following is a 198-amino-acid chain: Carnitine operon protein CaiE (198 aa).

The interval 174 to 198 (KPLTQAEENRPRLKGTTDVKPKSAQ) is disordered. The segment covering 180 to 198 (EENRPRLKGTTDVKPKSAQ) has biased composition (basic and acidic residues).

Belongs to the transferase hexapeptide repeat family.

It participates in amine and polyamine metabolism; carnitine metabolism. Overproduction of CaiE stimulates the activity of CaiB and CaiD. This chain is Carnitine operon protein CaiE, found in Salmonella typhimurium (strain LT2 / SGSC1412 / ATCC 700720).